We begin with the raw amino-acid sequence, 172 residues long: Centrin-1 (172 aa).

The tract at residues methionine 1–lysine 30 is disordered. EF-hand domains follow at residues glutamate 28–glutamate 63, proline 64–glutamate 99, aspartate 101–asparagine 136, and leucine 137–tyrosine 172. 5 residues coordinate Ca(2+): aspartate 41, aspartate 43, serine 45, threonine 47, and glutamate 52. Positions 150, 152, 154, 156, and 161 each coordinate Ca(2+).

It belongs to the centrin family. In terms of assembly, monomer. Interacts with CIMAP3. Interacts with USP49.

It localises to the cytoplasm. The protein resides in the cytoskeleton. Its subcellular location is the microtubule organizing center. It is found in the centrosome. Its function is as follows. Plays a fundamental role in microtubule-organizing center structure and function. Plays a role in sperm cilia formation. The sequence is that of Centrin-1 (CETN1) from Bos taurus (Bovine).